The primary structure comprises 536 residues: G-protein coupled receptor Mth2 (536 aa).

5 disulfide bridges follow: Cys17–Cys71, Cys73–Cys78, Cys82–Cys177, Cys83–Cys96, and Cys138–Cys197. N-linked (GlcNAc...) asparagine glycosylation is found at Asn24 and Asn33. Asn103, Asn113, Asn118, Asn159, and Asn184 each carry an N-linked (GlcNAc...) asparagine glycan. Residues 212 to 232 traverse the membrane as a helical segment; sequence YAMMFSIPFMMLTIAVYLLIP. Residues 233–241 lie on the Cytoplasmic side of the membrane; sequence ELRNQHGKS. Residues 242–262 traverse the membrane as a helical segment; sequence LVCYLIGLTVGYSSLCYVQLY. The Extracellular segment spans residues 263–273; that stretch reads QVDATGVTCKV. A helical membrane pass occupies residues 274–294; that stretch reads FGYTAYFFFMGAYMWLSVISF. At 295–314 the chain is on the cytoplasmic side; it reads DLWHNFRGTRGINRFQEKKR. The helical transmembrane segment at 315 to 335 threads the bilayer; sequence FLFYSLYSWGIALVFLAFTYC. The Extracellular segment spans residues 336 to 365; it reads AQQLSNLPDNLKPGIGDGVYCWLDMSNWAA. The helical transmembrane segment at 366-386 threads the bilayer; the sequence is MIYFYGPILAIVVANTIMFIM. The Cytoplasmic portion of the chain corresponds to 387–417; the sequence is TAIKIHGVQREMARIIASENSTKNLRTEKDK. The helical transmembrane segment at 418–438 threads the bilayer; sequence FGLFLRLFLIMGITWLTELIS. Topologically, residues 439–449 are extracellular; sequence YFVGSDKGWSK. Residues 450–470 form a helical membrane-spanning segment; that stretch reads LFYISDLANAMQGFLIFMLFV. Over 471 to 536 the chain is Cytoplasmic; sequence MKKKVKHLIT…VDPQKTTIFR (66 aa). The segment at 487-506 is disordered; the sequence is RDGSNQRQSQYSTKTTSSSV. A compositionally biased stretch (low complexity) spans 492-505; the sequence is QRQSQYSTKTTSSS.

This sequence belongs to the G-protein coupled receptor 2 family. Mth subfamily. Homodimer.

The protein resides in the cell membrane. Functionally, involved in biological aging and stress response. Essential for adult survival. The sequence is that of G-protein coupled receptor Mth2 (mth2) from Drosophila simulans (Fruit fly).